The primary structure comprises 418 residues: Peptide chain release factor subunit 1 (418 aa).

This sequence belongs to the eukaryotic release factor 1 family. As to quaternary structure, heterodimer of two subunits, one of which binds GTP.

The protein localises to the cytoplasm. Directs the termination of nascent peptide synthesis (translation) in response to the termination codons UAA, UAG and UGA. In Haloarcula marismortui (strain ATCC 43049 / DSM 3752 / JCM 8966 / VKM B-1809) (Halobacterium marismortui), this protein is Peptide chain release factor subunit 1.